The chain runs to 243 residues: UDP-2,3-diacylglucosamine hydrolase (243 aa).

Mn(2+) contacts are provided by aspartate 9, histidine 11, aspartate 42, asparagine 79, and histidine 114. Position 79–80 (79–80) interacts with substrate; that stretch reads NR. Substrate contacts are provided by aspartate 122, serine 160, asparagine 164, and histidine 195. Residues histidine 195 and histidine 197 each contribute to the Mn(2+) site.

It belongs to the LpxH family. The cofactor is Mn(2+).

Its subcellular location is the cell inner membrane. It catalyses the reaction UDP-2-N,3-O-bis[(3R)-3-hydroxytetradecanoyl]-alpha-D-glucosamine + H2O = 2-N,3-O-bis[(3R)-3-hydroxytetradecanoyl]-alpha-D-glucosaminyl 1-phosphate + UMP + 2 H(+). The protein operates within glycolipid biosynthesis; lipid IV(A) biosynthesis; lipid IV(A) from (3R)-3-hydroxytetradecanoyl-[acyl-carrier-protein] and UDP-N-acetyl-alpha-D-glucosamine: step 4/6. In terms of biological role, hydrolyzes the pyrophosphate bond of UDP-2,3-diacylglucosamine to yield 2,3-diacylglucosamine 1-phosphate (lipid X) and UMP by catalyzing the attack of water at the alpha-P atom. Involved in the biosynthesis of lipid A, a phosphorylated glycolipid that anchors the lipopolysaccharide to the outer membrane of the cell. The protein is UDP-2,3-diacylglucosamine hydrolase of Coxiella burnetii (strain RSA 331 / Henzerling II).